A 739-amino-acid chain; its full sequence is Phosphoribosylformylglycinamidine synthase subunit PurL (739 aa).

Histidine 54 is a catalytic residue. Positions 57 and 96 each coordinate ATP. Position 98 (glutamate 98) interacts with Mg(2+). Residues 99-102 and arginine 121 contribute to the substrate site; that span reads SHNH. Histidine 100 functions as the Proton acceptor in the catalytic mechanism. A Mg(2+)-binding site is contributed by aspartate 122. Substrate is bound at residue glutamine 245. Aspartate 275 lines the Mg(2+) pocket. 319–321 is a binding site for substrate; that stretch reads ESQ. ATP-binding residues include aspartate 504 and glycine 541. Asparagine 542 is a binding site for Mg(2+). Serine 544 provides a ligand contact to substrate.

Belongs to the FGAMS family. As to quaternary structure, monomer. Part of the FGAM synthase complex composed of 1 PurL, 1 PurQ and 2 PurS subunits.

It is found in the cytoplasm. It catalyses the reaction N(2)-formyl-N(1)-(5-phospho-beta-D-ribosyl)glycinamide + L-glutamine + ATP + H2O = 2-formamido-N(1)-(5-O-phospho-beta-D-ribosyl)acetamidine + L-glutamate + ADP + phosphate + H(+). Its pathway is purine metabolism; IMP biosynthesis via de novo pathway; 5-amino-1-(5-phospho-D-ribosyl)imidazole from N(2)-formyl-N(1)-(5-phospho-D-ribosyl)glycinamide: step 1/2. In terms of biological role, part of the phosphoribosylformylglycinamidine synthase complex involved in the purines biosynthetic pathway. Catalyzes the ATP-dependent conversion of formylglycinamide ribonucleotide (FGAR) and glutamine to yield formylglycinamidine ribonucleotide (FGAM) and glutamate. The FGAM synthase complex is composed of three subunits. PurQ produces an ammonia molecule by converting glutamine to glutamate. PurL transfers the ammonia molecule to FGAR to form FGAM in an ATP-dependent manner. PurS interacts with PurQ and PurL and is thought to assist in the transfer of the ammonia molecule from PurQ to PurL. In Lactococcus lactis subsp. lactis (strain IL1403) (Streptococcus lactis), this protein is Phosphoribosylformylglycinamidine synthase subunit PurL.